The sequence spans 322 residues: DNA repair and recombination protein RadA (322 aa).

105 to 112 (GMYGSGKT) contributes to the ATP binding site.

It belongs to the eukaryotic RecA-like protein family.

Functionally, involved in DNA repair and in homologous recombination. Binds and assemble on single-stranded DNA to form a nucleoprotein filament. Hydrolyzes ATP in a ssDNA-dependent manner and promotes DNA strand exchange between homologous DNA molecules. This chain is DNA repair and recombination protein RadA, found in Methanococcus maripaludis (strain C7 / ATCC BAA-1331).